Reading from the N-terminus, the 530-residue chain is Ubiquitin carboxyl-terminal hydrolase 17-like protein 20 (530 aa).

The 296-residue stretch at 80–375 (AGLQNMGNTC…QAYVLFYIQK (296 aa)) folds into the USP domain. Cys89 acts as the Nucleophile in catalysis. His334 functions as the Proton acceptor in the catalytic mechanism. Basic and acidic residues-rich tracts occupy residues 382-392 (SESVSRGREPR) and 398-413 (DTDR…RDHP). Disordered regions lie at residues 382–413 (SESV…RDHP) and 509–530 (RGRA…LVCQ). Residues 510-524 (GRARRSKGKNKHSKR) are compositionally biased toward basic residues.

It belongs to the peptidase C19 family. USP17 subfamily.

It is found in the nucleus. The protein localises to the endoplasmic reticulum. It carries out the reaction Thiol-dependent hydrolysis of ester, thioester, amide, peptide and isopeptide bonds formed by the C-terminal Gly of ubiquitin (a 76-residue protein attached to proteins as an intracellular targeting signal).. In terms of biological role, deubiquitinating enzyme that removes conjugated ubiquitin from specific proteins to regulate different cellular processes that may include cell proliferation, progression through the cell cycle, apoptosis, cell migration, and the cellular response to viral infection. The protein is Ubiquitin carboxyl-terminal hydrolase 17-like protein 20 (USP17L20) of Homo sapiens (Human).